The chain runs to 54 residues: UPF0391 membrane protein Bpro_0879 (54 aa).

The next 2 membrane-spanning stretches (helical) occupy residues 6–26 and 30–50; these read VVFL…IAAG and IAKI…VMGL.

Belongs to the UPF0391 family.

It is found in the cell membrane. In Polaromonas sp. (strain JS666 / ATCC BAA-500), this protein is UPF0391 membrane protein Bpro_0879.